The following is a 1129-amino-acid chain: Regulator of nonsense transcripts 1 (1129 aa).

Residues 1 to 415 are sufficient for interaction with RENT2; it reads MSVEAYGPSS…LRSSVGAPVE (415 aa). Phosphoserine occurs at positions 10 and 31. The segment at 39 to 70 is disordered; sequence TLPSQTQTPPGGPGGPGGGGAGGPGGAGAGAA. Positions 52–69 are enriched in gly residues; the sequence is GGPGGGGAGGPGGAGAGA. The Upf1 CH-rich domain occupies 115–272; the sequence is TKDLPIHACS…NKLEELWKEN (158 aa). The Zn(2+) site is built by Cys123, Cys126, Cys137, Ser140, Cys145, His155, His159, Cys165, Cys183, Cys186, Cys209, and Cys213. Residues 123 to 155 are C3H; the sequence is CSYCGIHDPACVVYCNTSKKWFCNGRGNTSGSH. Residues 137-165 are CC/SHH/C; that stretch reads CNTSKKWFCNGRGNTSGSHIVNHLVRAKC. Residues 183 to 213 are C4; sequence CYNCGCRNVFLLGFIPAKADSVVVLLCRQPC. Residues Gln486 and 506-510 each bind ATP; that span reads GTGKT. A Phosphoserine modification is found at Ser565. The ATP site is built by Gln676, Tyr713, and Glu844. Ser956 is modified (phosphoserine). 2 disordered regions span residues 1009–1058 and 1073–1096; these read FGQA…VASQ and SQPSQMSQPGLSQPELSQDSYLGD. Omega-N-methylarginine is present on Arg1019. Basic residues predominate over residues 1025 to 1034; that stretch reads KTGRGGRQKN. Polar residues predominate over residues 1041–1058; the sequence is PSQTNLPNSQASQDVASQ. Low complexity predominate over residues 1073–1086; it reads SQPSQMSQPGLSQP. Ser1089, Ser1107, Ser1110, and Ser1127 each carry phosphoserine. 2 short sequence motifs ([ST]-Q motif) span residues 1089-1090 and 1107-1108; these read SQ. The tract at residues 1110–1129 is disordered; it reads STYQGERAYQHGGVTGLSQY.

Belongs to the DNA2/NAM7 helicase family. Found in a post-splicing messenger ribonucleoprotein (mRNP) complex. Associates with the exon junction complex (EJC). Associates with the SGM1C complex; is phosphorylated by the complex kinase component SGM1. Part of a complex composed of SMG1, DHX34 and UPF1; within the complex DHX34 acts as a scaffolding protein to facilitate SMG1 phosphorylation of UPF1. Interacts with UPF2. Interacts with UPF3A and UPF3B. Interacts with EST1A. Interacts with SLBP. Interacts (when hyperphosphorylated) with PNRC2. Interacts with AGO1 and AGO2. Interacts with GSPT2. Interacts with isoform 1 and isoform 5 of ADAR/ADAR1. Interacts with SMG7. Interacts with ZC3H12A; this interaction occurs in a mRNA translationally active- and termination-dependent manner and is essential for ZC3H12A-mediated degradation of target mRNAs. Interacts with CPSF6. Interacts with MOV10; the interaction is direct and RNA-dependent. Interacts with SHFL; the interaction increases in the presence of RNA. Interacts with UPF2 and DDX4; interactions are mediated by TDRD6. Interacts with DHX34 and PABPC1/PABP1; the interactions are RNA-independent. Interacts with RBM46. As to quaternary structure, (Microbial infection) Interacts with human T-cell leukemia virus 1/HTLV-1 protein Tax; this interaction inhibits the host nonsense-mediated mRNA decay (NMD). In terms of processing, phosphorylated by SMG1; required for formation of mRNA surveillance complexes. Ubiquitous.

The protein localises to the cytoplasm. It localises to the P-body. It is found in the nucleus. The protein resides in the perinuclear region. It carries out the reaction ATP + H2O = ADP + phosphate + H(+). In terms of biological role, RNA-dependent helicase required for nonsense-mediated decay (NMD) of aberrant mRNAs containing premature stop codons and modulates the expression level of normal mRNAs. Is recruited to mRNAs upon translation termination and undergoes a cycle of phosphorylation and dephosphorylation; its phosphorylation appears to be a key step in NMD. Recruited by release factors to stalled ribosomes together with the SMG1C protein kinase complex to form the transient SURF (SMG1-UPF1-eRF1-eRF3) complex. In EJC-dependent NMD, the SURF complex associates with the exon junction complex (EJC) (located 50-55 or more nucleotides downstream from the termination codon) through UPF2 and allows the formation of an UPF1-UPF2-UPF3 surveillance complex which is believed to activate NMD. Phosphorylated UPF1 is recognized by EST1B/SMG5, SMG6 and SMG7 which are thought to provide a link to the mRNA degradation machinery involving exonucleolytic and endonucleolytic pathways, and to serve as adapters to protein phosphatase 2A (PP2A), thereby triggering UPF1 dephosphorylation and allowing the recycling of NMD factors. UPF1 can also activate NMD without UPF2 or UPF3, and in the absence of the NMD-enhancing downstream EJC indicative for alternative NMD pathways. Plays a role in replication-dependent histone mRNA degradation at the end of phase S; the function is independent of UPF2. For the recognition of premature termination codons (PTC) and initiation of NMD a competitive interaction between UPF1 and PABPC1 with the ribosome-bound release factors is proposed. The ATPase activity of UPF1 is required for disassembly of mRNPs undergoing NMD. Together with UPF2 and dependent on TDRD6, mediates the degradation of mRNA harboring long 3'UTR by inducing the NMD machinery. Also capable of unwinding double-stranded DNA and translocating on single-stranded DNA. This chain is Regulator of nonsense transcripts 1, found in Homo sapiens (Human).